Here is a 644-residue protein sequence, read N- to C-terminus: Exoribonuclease 2 (644 aa).

In terms of domain architecture, RNB spans 189 to 516; it reads RRDLTALDFV…NHRLLKAIIK (328 aa). An S1 motif domain is found at 561–643; it reads DTRFAAEIID…ETRSIIARPA (83 aa).

This sequence belongs to the RNR ribonuclease family. RNase II subfamily.

Its subcellular location is the cytoplasm. It catalyses the reaction Exonucleolytic cleavage in the 3'- to 5'-direction to yield nucleoside 5'-phosphates.. Its function is as follows. Involved in mRNA degradation. Hydrolyzes single-stranded polyribonucleotides processively in the 3' to 5' direction. This is Exoribonuclease 2 from Klebsiella pneumoniae subsp. pneumoniae (strain ATCC 700721 / MGH 78578).